The following is a 588-amino-acid chain: Thioredoxin domain-containing protein 3 (588 aa).

The Thioredoxin domain occupies 2-119; sequence ASKKREVQLQ…VINLIDEERK (118 aa). Cys39 and Cys42 form a disulfide bridge. 3 NDK regions span residues 157-257, 315-455, and 456-588; these read IAII…DQPE, LEKT…STLG, and LIKP…PEEN. Residues 230–261 are disordered; it reads GSKHNPPSEETEPQTDTEPNERSEDQPEVEAQ.

It in the C-terminal section; belongs to the NDK family. As to quaternary structure, monomer. In terms of tissue distribution, testis-specific. Expressed only in primary spermatocytes and round spermatids.

The protein localises to the cytoplasm. Its function is as follows. Probably required during the final stages of sperm tail maturation in the testis and/or epididymis, where extensive disulfide bonding of fibrous sheath (FS) proteins occurs. In vitro, it has neither nucleoside diphosphate kinase (NDPK) activity nor reducing activity on disulfide bonds. Exhibits a 3'-5' exonuclease activity with a preference for single-stranded DNA, suggesting roles in DNA proofreading and repair. This chain is Thioredoxin domain-containing protein 3, found in Homo sapiens (Human).